Consider the following 251-residue polypeptide: Triosephosphate isomerase (251 aa).

Substrate is bound at residue Asn-9 to Lys-11. The active-site Electrophile is the His-95. Residue Glu-167 is the Proton acceptor of the active site. Substrate is bound by residues Gly-173, Ser-213, and Gly-234–Gly-235.

Belongs to the triosephosphate isomerase family. In terms of assembly, homodimer.

The protein resides in the cytoplasm. It carries out the reaction D-glyceraldehyde 3-phosphate = dihydroxyacetone phosphate. It functions in the pathway carbohydrate biosynthesis; gluconeogenesis. Its pathway is carbohydrate degradation; glycolysis; D-glyceraldehyde 3-phosphate from glycerone phosphate: step 1/1. Its function is as follows. Involved in the gluconeogenesis. Catalyzes stereospecifically the conversion of dihydroxyacetone phosphate (DHAP) to D-glyceraldehyde-3-phosphate (G3P). This Carboxydothermus hydrogenoformans (strain ATCC BAA-161 / DSM 6008 / Z-2901) protein is Triosephosphate isomerase.